The primary structure comprises 130 residues: Large ribosomal subunit protein bL17 (130 aa).

The protein belongs to the bacterial ribosomal protein bL17 family. Part of the 50S ribosomal subunit. Contacts protein L32.

This chain is Large ribosomal subunit protein bL17, found in Buchnera aphidicola subsp. Acyrthosiphon pisum (strain 5A).